A 230-amino-acid polypeptide reads, in one-letter code: Type II restriction enzyme NlaIII (230 aa).

It catalyses the reaction Endonucleolytic cleavage of DNA to give specific double-stranded fragments with terminal 5'-phosphates.. Its function is as follows. A P subtype restriction enzyme that recognizes the double-stranded sequence 5'-CATG-3' and cleaves after G-4. This chain is Type II restriction enzyme NlaIII (nlaIIIR), found in Neisseria lactamica.